The following is a 492-amino-acid chain: Probable cobyric acid synthase (492 aa).

Positions 252-444 (PIEVNVVKFS…FHGILENFEF (193 aa)) constitute a GATase cobBQ-type domain. Cys330 serves as the catalytic Nucleophile. The active site involves His436.

The protein belongs to the CobB/CobQ family. CobQ subfamily.

Its pathway is cofactor biosynthesis; adenosylcobalamin biosynthesis. Functionally, catalyzes amidations at positions B, D, E, and G on adenosylcobyrinic A,C-diamide. NH(2) groups are provided by glutamine, and one molecule of ATP is hydrogenolyzed for each amidation. In Methanococcus maripaludis (strain DSM 14266 / JCM 13030 / NBRC 101832 / S2 / LL), this protein is Probable cobyric acid synthase.